The primary structure comprises 301 residues: Acetylglutamate kinase (301 aa).

Substrate-binding positions include 76–77, Arg98, and Asn192; that span reads GG.

It belongs to the acetylglutamate kinase family. ArgB subfamily.

The protein resides in the cytoplasm. The catalysed reaction is N-acetyl-L-glutamate + ATP = N-acetyl-L-glutamyl 5-phosphate + ADP. Its pathway is amino-acid biosynthesis; L-arginine biosynthesis; N(2)-acetyl-L-ornithine from L-glutamate: step 2/4. Functionally, catalyzes the ATP-dependent phosphorylation of N-acetyl-L-glutamate. The chain is Acetylglutamate kinase from Chlorobaculum parvum (strain DSM 263 / NCIMB 8327) (Chlorobium vibrioforme subsp. thiosulfatophilum).